Consider the following 101-residue polypeptide: Small ribosomal subunit protein bS18c (101 aa).

It belongs to the bacterial ribosomal protein bS18 family. As to quaternary structure, part of the 30S ribosomal subunit.

It localises to the plastid. It is found in the chloroplast. This Aethionema grandiflorum (Persian stone-cress) protein is Small ribosomal subunit protein bS18c.